The following is a 152-amino-acid chain: UPF0266 membrane protein YobD (152 aa).

3 helical membrane-spanning segments follow: residues 6–26 (LVLI…QFIM), 45–65 (IDSV…VTNH), and 67–87 (ALIT…IFWI).

Belongs to the UPF0266 family.

It localises to the cell inner membrane. The protein is UPF0266 membrane protein YobD of Escherichia coli O127:H6 (strain E2348/69 / EPEC).